We begin with the raw amino-acid sequence, 434 residues long: Protein maelstrom homolog (434 aa).

A DNA-binding region (HMG box) is located at residues 4-73 (RRGSRNAYYF…AQGKDAGPWE (70 aa)). The tract at residues 357 to 387 (SHFSSSNQEQRSNTPTGDYPSGVKISGQSSS) is disordered. A compositionally biased stretch (polar residues) spans 363 to 372 (NQEQRSNTPT).

It belongs to the maelstrom family. As to quaternary structure, interacts with SMARCB1, SIN3B and DDX4. Interacts with piRNA-associated proteins TDRD1, PIWIL1 and PIWIL2. Interacts with TEX19.

It is found in the cytoplasm. The protein resides in the nucleus. Functionally, plays a central role during spermatogenesis by repressing transposable elements and preventing their mobilization, which is essential for the germline integrity. Acts via the piRNA metabolic process, which mediates the repression of transposable elements during meiosis by forming complexes composed of piRNAs and Piwi proteins and governs the methylation and subsequent repression of transposons. Its association with piP-bodies suggests a participation in the secondary piRNAs metabolic process. Required for the localization of germ-cell factors to the meiotic nuage. In Sus scrofa (Pig), this protein is Protein maelstrom homolog (MAEL).